A 393-amino-acid polypeptide reads, in one-letter code: uncharacterized protein (393 aa).

Residues C72, C82, C85, and C160 each contribute to the [4Fe-4S] cluster site. Positions 215, 245, 267, and 313 each coordinate S-adenosyl-L-methionine. The active-site Nucleophile is the C340.

It belongs to the class I-like SAM-binding methyltransferase superfamily. RNA M5U methyltransferase family.

This is an uncharacterized protein from Nitrosomonas europaea (strain ATCC 19718 / CIP 103999 / KCTC 2705 / NBRC 14298).